A 334-amino-acid chain; its full sequence is Protein-methionine-sulfoxide reductase catalytic subunit MsrP (334 aa).

Positions 1 to 44 form a signal peptide, tat-type signal; it reads MKKNQFLKESDVTAESVFFMKRRQVLKALGISAAALSLPHAAHA. Residues Asn-88, 91 to 92, Cys-146, Thr-181, Asn-233, Arg-238, and 249 to 251 each bind Mo-molybdopterin; these read YE and GIK.

The protein belongs to the MsrP family. In terms of assembly, heterodimer of a catalytic subunit (MsrP) and a heme-binding subunit (MsrQ). Mo-molybdopterin serves as cofactor. Predicted to be exported by the Tat system. The position of the signal peptide cleavage has not been experimentally proven.

The protein localises to the periplasm. It carries out the reaction L-methionyl-[protein] + a quinone + H2O = L-methionyl-(S)-S-oxide-[protein] + a quinol. The enzyme catalyses L-methionyl-[protein] + a quinone + H2O = L-methionyl-(R)-S-oxide-[protein] + a quinol. Part of the MsrPQ system that repairs oxidized periplasmic proteins containing methionine sulfoxide residues (Met-O), using respiratory chain electrons. Thus protects these proteins from oxidative-stress damage caused by reactive species of oxygen and chlorine generated by the host defense mechanisms. MsrPQ is essential for the maintenance of envelope integrity under bleach stress, rescuing a wide series of structurally unrelated periplasmic proteins from methionine oxidation, including the primary periplasmic chaperone SurA and the lipoprotein Pal. The catalytic subunit MsrP is non-stereospecific, being able to reduce both (R-) and (S-) diastereoisomers of methionine sulfoxide. In Escherichia coli O157:H7, this protein is Protein-methionine-sulfoxide reductase catalytic subunit MsrP.